The chain runs to 544 residues: Chaperonin GroEL (544 aa).

Residues 29-32 (TLGP), 86-90 (DGTTT), Gly413, 476-478 (NAA), and Asp492 each bind ATP.

This sequence belongs to the chaperonin (HSP60) family. In terms of assembly, forms a cylinder of 14 subunits composed of two heptameric rings stacked back-to-back. Interacts with the co-chaperonin GroES.

It is found in the cytoplasm. It catalyses the reaction ATP + H2O + a folded polypeptide = ADP + phosphate + an unfolded polypeptide.. In terms of biological role, together with its co-chaperonin GroES, plays an essential role in assisting protein folding. The GroEL-GroES system forms a nano-cage that allows encapsulation of the non-native substrate proteins and provides a physical environment optimized to promote and accelerate protein folding. The chain is Chaperonin GroEL from Bacillus licheniformis (strain ATCC 14580 / DSM 13 / JCM 2505 / CCUG 7422 / NBRC 12200 / NCIMB 9375 / NCTC 10341 / NRRL NRS-1264 / Gibson 46).